The following is a 244-amino-acid chain: Glucosamine-6-phosphate deaminase (244 aa).

Aspartate 67 (proton acceptor; for enolization step) is an active-site residue. Asparagine 136 acts as the For ring-opening step in catalysis. Histidine 138 (proton acceptor; for ring-opening step) is an active-site residue. Catalysis depends on glutamate 143, which acts as the For ring-opening step.

Belongs to the glucosamine/galactosamine-6-phosphate isomerase family. NagB subfamily.

It catalyses the reaction alpha-D-glucosamine 6-phosphate + H2O = beta-D-fructose 6-phosphate + NH4(+). It participates in amino-sugar metabolism; N-acetylneuraminate degradation; D-fructose 6-phosphate from N-acetylneuraminate: step 5/5. Its function is as follows. Catalyzes the reversible isomerization-deamination of glucosamine 6-phosphate (GlcN6P) to form fructose 6-phosphate (Fru6P) and ammonium ion. The polypeptide is Glucosamine-6-phosphate deaminase (Clostridium botulinum (strain Okra / Type B1)).